We begin with the raw amino-acid sequence, 187 residues long: uncharacterized protein (187 aa).

Residues 42–63 (RTNGPGKDSFSFSTSGSKPSSS) form a disordered region. Residues 50-63 (SFSFSTSGSKPSSS) are compositionally biased toward low complexity.

This is an uncharacterized protein from Saccharomyces cerevisiae (strain ATCC 204508 / S288c) (Baker's yeast).